Reading from the N-terminus, the 1295-residue chain is MQALERDIDINRLEKISIGLASADEIREWSRGEVTKPETINYRTLRPEKDGLFDERIFGPTKDWECYCGKYKRIRFKGIICERCGVEVTRARVRRDRMGHIELAAPVAHVWFVKGVPSRMGYLLDISPKDLDRVLYFASSIVTWVDREGRANDIDRLRQQVEEEIRQIEQDRDEEITAAQALLTKRISVIKGESSPDELTEDYADVPEEEREEAIARARREAEETIEDIKRSMDEQIELIRRAWEEFQTLEPRQIVDDEELFREMKDRFGDEYGYGVYFRGGMGAEAIRDLIRQVDLEKEARELRQVVGESRGQKRQKAIKRLKVVDAFRTSGNKPEWMILDAIPVLPPDLRPMVQLDGGRFATSDLNDLYRRVINRNNRLKRLLDLGAPDVIVNNEKRMLQEAVDALFDNGRRGRAVTGAGNRPLKSLSDMLKGKQGRFRQNLLGKRVDYSGRSVIVVGPQLEMHQCGLPRLMAVELFKPFVMKVLVDRALAPNIRSAKQMVERLRPEVWDVLEDVIKEHPVLLNRAPTLHRLGIQAFEPVLVEGKAIQIHPLVCAAFNADFDGDQMAVHVPLSPEAQAEARILMLSTQNILKPADGFPVAVPSQDMVLGLYYITYAGEDFEEREPKALLASYAEADNAYREGSLRLHDKVILRREGERIETTLGRVLFNESIERTLRGYLGDAYNPAAYRFVNHELKKGEIKQLVQQYVERYPTELVSQLLDTLKHVGFHTATLAGISIGKNDIVVPEQKREILEKYEKLVEEVEEQWEAGFISDEERAERVIGLWTQAKNEVEEAMKANLWKLNPIYMMANSGARGSYSQITQLAGMRGLMTNAKGEIIDEPVKSNFMEGLTVLEYFTSTHGARKGQADTALRTADSGYLTRRLVDVAQDVVIREEDCGTDGYIELPLYLEDGQGDPNDSVAARYLARDLVNPETGEVVAEAGTDITRPLFEAWLEELPRETKVPVRTPTKCENPHGVCQKCYGRSLATNRPVDVGEAVGIIAAQSIGEPGTQLTMRTFHTGGVSGVEDITAGLPRVVELFEARHPKGEAVISDIDGIVSLEETDSERLVRVVVTAPDGSEAREYRVERQLLRPEIVDGAEIRANTPITEGSLYPHQILENDLRYGRGTTATERYLVDEVQKVYRAQGVDIHDKHIEIIVRQMLRKVLVEEPGDTRFLPEQVADRFSVLAENERVEEEGGRPAEFHTILMGITKASLATESFLSAASFQETARVLTDAAIEGKVDNLTGLKENVIIGKLIPAATGLPKYRRLTVTVEGYRADDVDELDIAAS.

Residues C66, C68, C81, and C84 each contribute to the Zn(2+) site. Mg(2+) is bound by residues D562, D564, and D566. 4 residues coordinate Zn(2+): C901, C975, C982, and C985.

The protein belongs to the RNA polymerase beta' chain family. The RNAP catalytic core consists of 2 alpha, 1 beta, 1 beta' and 1 omega subunit. When a sigma factor is associated with the core the holoenzyme is formed, which can initiate transcription. Mg(2+) is required as a cofactor. Requires Zn(2+) as cofactor.

It catalyses the reaction RNA(n) + a ribonucleoside 5'-triphosphate = RNA(n+1) + diphosphate. Its function is as follows. DNA-dependent RNA polymerase catalyzes the transcription of DNA into RNA using the four ribonucleoside triphosphates as substrates. This Rubrobacter xylanophilus (strain DSM 9941 / JCM 11954 / NBRC 16129 / PRD-1) protein is DNA-directed RNA polymerase subunit beta'.